The primary structure comprises 758 residues: 5-methyltetrahydropteroyltriglutamate--homocysteine methyltransferase (758 aa).

5-methyltetrahydropteroyltri-L-glutamate-binding positions include 16 to 19 (RELK) and Lys112. L-homocysteine contacts are provided by residues 433-435 (IGS) and Glu486. Residues 433–435 (IGS) and Glu486 each bind L-methionine. 5-methyltetrahydropteroyltri-L-glutamate-binding positions include 517–518 (RC) and Trp563. Asp601 is a binding site for L-homocysteine. Residue Asp601 coordinates L-methionine. Glu607 serves as a coordination point for 5-methyltetrahydropteroyltri-L-glutamate. Residues His643, Cys645, and Glu667 each contribute to the Zn(2+) site. The active-site Proton donor is the His696. Cys728 is a binding site for Zn(2+).

This sequence belongs to the vitamin-B12 independent methionine synthase family. Zn(2+) is required as a cofactor.

It catalyses the reaction 5-methyltetrahydropteroyltri-L-glutamate + L-homocysteine = tetrahydropteroyltri-L-glutamate + L-methionine. It functions in the pathway amino-acid biosynthesis; L-methionine biosynthesis via de novo pathway; L-methionine from L-homocysteine (MetE route): step 1/1. Its function is as follows. Catalyzes the transfer of a methyl group from 5-methyltetrahydrofolate to homocysteine resulting in methionine formation. This Neisseria meningitidis serogroup C / serotype 2a (strain ATCC 700532 / DSM 15464 / FAM18) protein is 5-methyltetrahydropteroyltriglutamate--homocysteine methyltransferase.